A 245-amino-acid polypeptide reads, in one-letter code: Uridylate kinase (245 aa).

13–16 contributes to the ATP binding site; it reads KLSG. G56 is a UMP binding site. 2 residues coordinate ATP: G57 and R61. Residues D76 and 138-145 contribute to the UMP site; that span reads TGRPFFTT. 3 residues coordinate ATP: N166, Y172, and D175.

This sequence belongs to the UMP kinase family. As to quaternary structure, homohexamer.

The protein resides in the cytoplasm. It catalyses the reaction UMP + ATP = UDP + ADP. The protein operates within pyrimidine metabolism; CTP biosynthesis via de novo pathway; UDP from UMP (UMPK route): step 1/1. With respect to regulation, inhibited by UTP. In terms of biological role, catalyzes the reversible phosphorylation of UMP to UDP. The protein is Uridylate kinase of Mycoplasma mobile (strain ATCC 43663 / 163K / NCTC 11711) (Mesomycoplasma mobile).